The primary structure comprises 195 residues: Small ribosomal subunit protein uS5 (195 aa).

In terms of domain architecture, S5 DRBM spans Ile-22 to Val-85. The tract at residues Gln-164–Gly-195 is disordered. Over residues Lys-172 to Asp-182 the composition is skewed to basic and acidic residues. Residues Gly-183–Gly-195 are compositionally biased toward low complexity.

The protein belongs to the universal ribosomal protein uS5 family. Part of the 30S ribosomal subunit. Contacts proteins S4 and S8.

In terms of biological role, with S4 and S12 plays an important role in translational accuracy. Its function is as follows. Located at the back of the 30S subunit body where it stabilizes the conformation of the head with respect to the body. In Phenylobacterium zucineum (strain HLK1), this protein is Small ribosomal subunit protein uS5.